Here is a 344-residue protein sequence, read N- to C-terminus: Anthranilate phosphoribosyltransferase (344 aa).

Residues G86, 89–90, T94, 96–99, 114–122, and S126 contribute to the 5-phospho-alpha-D-ribose 1-diphosphate site; these read GD, NIST, and KHGNKSASG. Residue G86 coordinates anthranilate. S98 is a binding site for Mg(2+). Residue N117 participates in anthranilate binding. Position 172 (R172) interacts with anthranilate. Residues D231 and E232 each contribute to the Mg(2+) site.

Belongs to the anthranilate phosphoribosyltransferase family. In terms of assembly, homodimer. The cofactor is Mg(2+).

It carries out the reaction N-(5-phospho-beta-D-ribosyl)anthranilate + diphosphate = 5-phospho-alpha-D-ribose 1-diphosphate + anthranilate. It participates in amino-acid biosynthesis; L-tryptophan biosynthesis; L-tryptophan from chorismate: step 2/5. Functionally, catalyzes the transfer of the phosphoribosyl group of 5-phosphorylribose-1-pyrophosphate (PRPP) to anthranilate to yield N-(5'-phosphoribosyl)-anthranilate (PRA). The polypeptide is Anthranilate phosphoribosyltransferase (Prochlorococcus marinus (strain AS9601)).